The chain runs to 106 residues: Urease subunit beta (106 aa).

It belongs to the urease beta subunit family. As to quaternary structure, heterotrimer of UreA (gamma), UreB (beta) and UreC (alpha) subunits. Three heterotrimers associate to form the active enzyme.

It is found in the cytoplasm. The catalysed reaction is urea + 2 H2O + H(+) = hydrogencarbonate + 2 NH4(+). The protein operates within nitrogen metabolism; urea degradation; CO(2) and NH(3) from urea (urease route): step 1/1. This Escherichia coli O157:H7 protein is Urease subunit beta.